Consider the following 354-residue polypeptide: Putative Xaa-Pro aminopeptidase (354 aa).

Residues Asp-213, Asp-224, His-290, Glu-319, and Glu-333 each coordinate Mn(2+).

Belongs to the peptidase M24B family. Requires Mn(2+) as cofactor.

The enzyme catalyses Release of any N-terminal amino acid, including proline, that is linked to proline, even from a dipeptide or tripeptide.. This chain is Putative Xaa-Pro aminopeptidase (pepP), found in Mycoplasma genitalium (strain ATCC 33530 / DSM 19775 / NCTC 10195 / G37) (Mycoplasmoides genitalium).